The following is a 1529-amino-acid chain: DNA-directed RNA polymerase subunit beta' (1529 aa).

C156, C158, C183, and C186 together coordinate Zn(2+). Residues D1328, D1330, and D1332 each contribute to the Mg(2+) site.

It belongs to the RNA polymerase beta' chain family. RpoC1 subfamily. In terms of assembly, in plastids the minimal PEP RNA polymerase catalytic core is composed of four subunits: alpha, beta, beta', and beta''. When a (nuclear-encoded) sigma factor is associated with the core the holoenzyme is formed, which can initiate transcription. Mg(2+) is required as a cofactor. The cofactor is Zn(2+).

The protein localises to the plastid. It is found in the chloroplast. The catalysed reaction is RNA(n) + a ribonucleoside 5'-triphosphate = RNA(n+1) + diphosphate. Functionally, DNA-dependent RNA polymerase catalyzes the transcription of DNA into RNA using the four ribonucleoside triphosphates as substrates. This is DNA-directed RNA polymerase subunit beta' from Tetradesmus obliquus (Green alga).